A 292-amino-acid chain; its full sequence is Elongation factor Ts (292 aa).

Residues 81–84 are involved in Mg(2+) ion dislocation from EF-Tu; it reads TDFV.

It belongs to the EF-Ts family.

It localises to the cytoplasm. In terms of biological role, associates with the EF-Tu.GDP complex and induces the exchange of GDP to GTP. It remains bound to the aminoacyl-tRNA.EF-Tu.GTP complex up to the GTP hydrolysis stage on the ribosome. This chain is Elongation factor Ts, found in Psychromonas ingrahamii (strain DSM 17664 / CCUG 51855 / 37).